Here is an 88-residue protein sequence, read N- to C-terminus: Small ribosomal subunit protein uS17 (88 aa).

This sequence belongs to the universal ribosomal protein uS17 family. In terms of assembly, part of the 30S ribosomal subunit.

One of the primary rRNA binding proteins, it binds specifically to the 5'-end of 16S ribosomal RNA. In Hahella chejuensis (strain KCTC 2396), this protein is Small ribosomal subunit protein uS17.